A 1545-amino-acid chain; its full sequence is Immunoglobulin A1 protease autotransporter (1545 aa).

The signal sequence occupies residues 1–25; the sequence is MLNKKFKLNFIALTVAYALTPYTEA. One can recognise a Peptidase S6 domain in the interval 26 to 336; that stretch reads ALVRDDVDYQ…NIYKPEFAEK (311 aa). Ser292 is a catalytic residue. Positions 995–1019 are enriched in polar residues; that stretch reads TVDTTNITTPNNIQADVPSVPSNNE. A disordered region spans residues 995–1246; the sequence is TVDTTNITTP…NVEPATTSSN (252 aa). Over residues 1036-1046 the composition is skewed to low complexity; that stretch reads TPSETTETVAE. The segment covering 1048–1060 has biased composition (basic and acidic residues); sequence SKQESKTVEKNEQ. Residues 1080–1094 show a composition bias toward polar residues; the sequence is VKANTQTNEVAQSGS. Residues 1095–1125 are compositionally biased toward basic and acidic residues; sequence ETKETQTTETKETATVEKEEKAKVETEKTQE. Composition is skewed to polar residues over residues 1129-1145 and 1161-1222; these read VTSQ…TVQP and EPQS…SSNK. In terms of domain architecture, Autotransporter spans 1293–1545; the sequence is NNEGQYNVWV…TAELKLSFSF (253 aa).

It localises to the periplasm. It is found in the secreted. The protein resides in the cell surface. Its subcellular location is the cell outer membrane. The catalysed reaction is Cleavage of immunoglobulin A molecules at certain Pro-|-Xaa bonds in the hinge region. No small molecule substrates are known.. Virulence factor; cleaves host immunoglobulin A producing intact Fc and Fab fragments. The protein is Immunoglobulin A1 protease autotransporter (iga) of Haemophilus influenzae.